Here is a 175-residue protein sequence, read N- to C-terminus: Sec-independent protein translocase protein TatB (175 aa).

Residues 1–21 (MLDLGLSKMALIGVVALVVLG) form a helical membrane-spanning segment. Positions 155-175 (SGAARVARHQPASLRRPTRFF) are disordered.

The protein belongs to the TatB family. As to quaternary structure, the Tat system comprises two distinct complexes: a TatABC complex, containing multiple copies of TatA, TatB and TatC subunits, and a separate TatA complex, containing only TatA subunits. Substrates initially bind to the TatABC complex, which probably triggers association of the separate TatA complex to form the active translocon.

It localises to the cell inner membrane. Functionally, part of the twin-arginine translocation (Tat) system that transports large folded proteins containing a characteristic twin-arginine motif in their signal peptide across membranes. Together with TatC, TatB is part of a receptor directly interacting with Tat signal peptides. TatB may form an oligomeric binding site that transiently accommodates folded Tat precursor proteins before their translocation. The chain is Sec-independent protein translocase protein TatB from Burkholderia lata (strain ATCC 17760 / DSM 23089 / LMG 22485 / NCIMB 9086 / R18194 / 383).